Consider the following 101-residue polypeptide: Protein S100-A4 (101 aa).

Residue alanine 2 is modified to N-acetylalanine. Lysine 7 is subject to N6-acetyllysine. 2 consecutive EF-hand domains span residues 13 to 48 (VSTFHKYSGKEGDKFKLNKSELKELLTRELPSFLGK) and 50 to 85 (TDETAFQKLMSNLDCNKDNEVDFQEYCVFLSCIAMM). Ca(2+) is bound by residues lysine 28 and glutamate 33. An N6-acetyllysine modification is found at lysine 35. Aspartate 63, asparagine 65, aspartate 67, glutamate 69, and glutamate 74 together coordinate Ca(2+).

The protein belongs to the S-100 family. In terms of assembly, homodimer. Interacts with PPFIBP1 in a calcium-dependent mode. Interacts with PGLYRP1; this complex acts as a chemoattractant that promotes lymphocyte movement. Interacts with MYH9; this interaction increases cell motility. Interacts with Annexin 2/ANXA2. Interacts with TP53; this interaction promotes TP53 degradation. Interacts with CCR5 and CXCR3. Interacts with FCGR3A; this interaction inhibits PKC-dependent phosphorylation of FCGR3A.

The protein localises to the secreted. The protein resides in the nucleus. It localises to the cytoplasm. In terms of biological role, calcium-binding protein that plays a role in various cellular processes including motility, angiogenesis, cell differentiation, apoptosis, and autophagy. Increases cell motility and invasiveness by interacting with non-muscle myosin heavy chain (NMMHC) IIA/MYH9. Mechanistically, promotes filament depolymerization and increases the amount of soluble myosin-IIA, resulting in the formation of stable protrusions facilitating chemotaxis. Also modulates the pro-apoptotic function of TP53 by binding to its C-terminal transactivation domain within the nucleus and reducing its protein levels. Within the extracellular space, stimulates cytokine production including granulocyte colony-stimulating factor and CCL24 from T-lymphocytes. In addition, stimulates T-lymphocyte chemotaxis by acting as a chemoattractant complex with PGLYRP1 that promotes lymphocyte migration via CCR5 and CXCR3 receptors. In Bos taurus (Bovine), this protein is Protein S100-A4 (S100A4).